Consider the following 256-residue polypeptide: Protein YIPF5 (256 aa).

Over 1 to 125 (MSNFDNFNTD…ADGSIMNETD (125 aa)) the chain is Cytoplasmic. Residues 126-146 (LAGPMVFCLAFGATLLLAGKI) form a helical membrane-spanning segment. Residue Q147 is a topological domain, lumenal. A helical membrane pass occupies residues 148 to 168 (FGYVYGISAMGCLGMYCLLNL). Residues 169–172 (MSMT) lie on the Cytoplasmic side of the membrane. The helical transmembrane segment at 173–193 (GVSFGCVSSVLGYCLLPMIIL) threads the bilayer. At 194–195 (ST) the chain is on the lumenal side. The chain crosses the membrane as a helical span at residues 196–216 (FAVIFSLQGILGIVLAALIIG). At 217 to 235 (WCSFSASKIFISALAMDGQ) the chain is on the cytoplasmic side. The chain crosses the membrane as a helical span at residues 236 to 256 (QLLVAYPCALLYGVFALISVF).

It belongs to the YIP1 family.

The protein resides in the endoplasmic reticulum membrane. It localises to the golgi apparatus. Its subcellular location is the cis-Golgi network membrane. In terms of biological role, plays a role in transport between endoplasmic reticulum and Golgi. The polypeptide is Protein YIPF5 (yipf5) (Xenopus laevis (African clawed frog)).